A 208-amino-acid polypeptide reads, in one-letter code: MSTVLFVKSSDRTAEEGVSTKLYEAFLAAYKENNPNDEVVELDLHKENLPYLGRDMINGTFKAGQGMEMTEDEKKQAAIADKYLNQFVKADKVVFAFPLWNFTVPAVLHTYVDYLSRAGVTFKYTQEGPVGLMGGKKVALLNARGGVYSEGPMAALEMSLNFMKTVLGFWGVQDLHTVVIEGHNAAPDQAQEIVEKGLQEAKDLAAKF.

Ser10 contributes to the FMN binding site.

It belongs to the azoreductase type 1 family. As to quaternary structure, homodimer. The cofactor is FMN.

It catalyses the reaction 2 a quinone + NADH + H(+) = 2 a 1,4-benzosemiquinone + NAD(+). The catalysed reaction is N,N-dimethyl-1,4-phenylenediamine + anthranilate + 2 NAD(+) = 2-(4-dimethylaminophenyl)diazenylbenzoate + 2 NADH + 2 H(+). In terms of biological role, quinone reductase that provides resistance to thiol-specific stress caused by electrophilic quinones. Contributes to resistance to 2-methylhydroquinone (2-MHQ) and catechol. Also exhibits azoreductase activity. Catalyzes the reductive cleavage of the azo bond in aromatic azo compounds to the corresponding amines. In Bacillus subtilis (strain 168), this protein is FMN-dependent NADH:quinone oxidoreductase 1.